We begin with the raw amino-acid sequence, 269 residues long: Propanediol uptake facilitator PduF (269 aa).

A run of 2 helical transmembrane segments spans residues 10–30 (IAEF…LSAL) and 42–62 (ICII…GISG). The short motif at 66–68 (NPA) is the NPA 1 element. 3 helical membrane passes run 69–89 (ITIA…PYTV), 143–163 (VWQA…MIMA), and 179–199 (LLIG…TGFA). The NPA 2 signature appears at 201-203 (NPA). A helical membrane pass occupies residues 228 to 248 (IPYFIVPIVAPIIGACAGAAI).

It belongs to the MIP/aquaporin (TC 1.A.8) family.

It is found in the cell inner membrane. Its function is as follows. Probably facilitates diffusion of 1,2-propanediol (1,2-PD) into the cell. In Citrobacter freundii, this protein is Propanediol uptake facilitator PduF.